The following is an 851-amino-acid chain: Transcriptional regulator RFX1 (851 aa).

Polar residues-rich tracts occupy residues 1–11 (MSSDQTPQNRN) and 20–34 (PRLQ…STGP). Disordered stretches follow at residues 1–121 (MSSD…EPHP), 134–170 (QSQF…PQTY), and 195–230 (HEAS…TGEN). Residues 38–53 (QQRERSQEQESDHEHQ) are compositionally biased toward basic and acidic residues. A compositionally biased stretch (low complexity) spans 54-84 (QAQQHLHQFQQSNLTPSTTAFPSSTSIPTFS). Positions 85–114 (KQDQGYHNQFSSPQSSYRKIGNFAQSSNAP) are enriched in polar residues. Positions 141–170 (YSSPYIGQSQSQSQSQSQAQPQPHPQPQTY) are enriched in low complexity. A compositionally biased stretch (polar residues) spans 199–211 (SADNDSATNITTP). Residues 282-357 (GMVWLLNSCD…YHYCGIKLTG (76 aa)) constitute a DNA-binding region (RFX-type winged-helix). Disordered regions lie at residues 368–411 (YQQK…SVSY) and 783–806 (PPSL…TGTQ). The segment covering 384–393 (AQVGSSTSSA) has biased composition (polar residues). The span at 783 to 797 (PPSLSSLPQTQQQNP) shows a compositional bias: low complexity.

This sequence belongs to the RFX family.

The protein localises to the nucleus. In terms of biological role, transcription factor involved in DNA damage responses, morphogenesis, and virulence. The chain is Transcriptional regulator RFX1 (RFX1) from Candida albicans (strain SC5314 / ATCC MYA-2876) (Yeast).